The following is a 950-amino-acid chain: Glycine dehydrogenase (decarboxylating) (950 aa).

The residue at position 698 (lysine 698) is an N6-(pyridoxal phosphate)lysine.

The protein belongs to the GcvP family. The glycine cleavage system is composed of four proteins: P, T, L and H. It depends on pyridoxal 5'-phosphate as a cofactor.

It catalyses the reaction N(6)-[(R)-lipoyl]-L-lysyl-[glycine-cleavage complex H protein] + glycine + H(+) = N(6)-[(R)-S(8)-aminomethyldihydrolipoyl]-L-lysyl-[glycine-cleavage complex H protein] + CO2. The glycine cleavage system catalyzes the degradation of glycine. The P protein binds the alpha-amino group of glycine through its pyridoxal phosphate cofactor; CO(2) is released and the remaining methylamine moiety is then transferred to the lipoamide cofactor of the H protein. In Neisseria gonorrhoeae (strain NCCP11945), this protein is Glycine dehydrogenase (decarboxylating).